Consider the following 951-residue polypeptide: 5'-3' exoribonuclease 2 (951 aa).

Residues Pro-262–Gly-278 form a CCHC-type zinc finger. Residue Lys-286 is modified to N6-acetyllysine. Residues Lys-408 to Asn-508 are disordered. A compositionally biased stretch (basic residues) spans Arg-416–Lys-426. Thr-439 bears the Phosphothreonine mark. Polar residues-rich tracts occupy residues Ser-445–Arg-458 and Gln-467–Ser-485. 9 positions are modified to phosphoserine: Ser-448, Ser-471, Ser-473, Ser-475, Ser-482, Ser-487, Ser-499, Ser-501, and Ser-678. Asymmetric dimethylarginine; alternate occurs at positions 824, 847, and 851. Arg-824, Arg-847, and Arg-851 each carry omega-N-methylarginine; alternate. An Asymmetric dimethylarginine modification is found at Arg-880. At Arg-883 the chain carries Asymmetric dimethylarginine; alternate. Residue Arg-883 is modified to Omega-N-methylarginine; alternate. Arg-895 is modified (omega-N-methylarginine). Positions Asn-907–Asn-951 are disordered. The segment covering Pro-920–Lys-938 has biased composition (basic and acidic residues). Arg-947 carries the post-translational modification Asymmetric dimethylarginine; alternate. Arg-947 carries the post-translational modification Omega-N-methylarginine; alternate.

This sequence belongs to the 5'-3' exonuclease family. XRN2/RAT1 subfamily. Interacts with POLR2A and SMN1/SMN2. Interacts with CDKN2AIP and NKRF. Interacts with CDKN2AIPNL; the interaction is direct. Interacts with TRIM71 (via NHL repeats) in an RNA-dependent manner. Interacts with DHX34; the interaction is RNA-independent. In terms of tissue distribution, expressed in the spleen, testis, heart, brain, lung, liver, skeletal muscle, and kidney.

It is found in the nucleus. It localises to the nucleolus. In terms of biological role, possesses 5'-&gt;3' exoribonuclease activity. May promote the termination of transcription by RNA polymerase II. During transcription termination, cleavage at the polyadenylation site liberates a 5' fragment which is subsequently processed to form the mature mRNA and a 3' fragment which remains attached to the elongating polymerase. The processive degradation of this 3' fragment by this protein may promote termination of transcription. Binds to RNA polymerase II (RNAp II) transcription termination R-loops formed by G-rich pause sites. In Mus musculus (Mouse), this protein is 5'-3' exoribonuclease 2 (Xrn2).